Consider the following 366-residue polypeptide: 2-aminoethylphosphonate--pyruvate transaminase (366 aa).

N6-(pyridoxal phosphate)lysine is present on lysine 194.

The protein belongs to the class-V pyridoxal-phosphate-dependent aminotransferase family. PhnW subfamily. As to quaternary structure, homodimer. Requires pyridoxal 5'-phosphate as cofactor.

The enzyme catalyses (2-aminoethyl)phosphonate + pyruvate = phosphonoacetaldehyde + L-alanine. Involved in phosphonate degradation. This is 2-aminoethylphosphonate--pyruvate transaminase from Lactiplantibacillus plantarum (strain ATCC BAA-793 / NCIMB 8826 / WCFS1) (Lactobacillus plantarum).